A 576-amino-acid chain; its full sequence is MSQDNATAPTSNFLRQIIDADLAQGTYADRKDATGQPIPPVVTRFPPEPNGYLHIGHAKSIWVNFGMARDYNGRCHLRFDDTNPVKEDTEYVDSIIDAVHWLGYSWSDAGGEHLYYASDYFEQLYGFAEVLIQRGVAYVDSQSAEQIAANRGDFTRPGTLSPFRDRSVDENLALFRDMRAGKYKDGEHVLRAKIDMAAPNIVMRDPVLYRIRHAHHHRTGDAWCIYPMYDFTHCISDALENITHSLCTLEFENNRPLYDWVLDHLRDAGVLAAPLPHQYEFARLHLTYAITSKRKLLQLVTEKRVDGWDDPRMPTLVGIRRRGYTPESIQLFCERVGVSKADSWIDMSILEGAVRDDLDARAPRSVAVLDPVKLVLDNVPADFNEPCSAPVHPKQPELGRREFPLTRELWIEREDFTETPPKGYFRLFPGNKVRLRYGYVIECTGCDKDAAGNITAVHANIIPDTKSGTPGADSVKVKGNIHWVSAAHALEAEVRLYDRLFSDPQPDSGDKNFLDALNPNSKKIVKAFLEPTLATAKAEDRFQFERHGYFVADRIDSQPGKPVFNRVVGLKDSWGK.

The short motif at 47 to 57 (PEPNGYLHIGH) is the 'HIGH' region element. ATP-binding positions include 48–50 (EPN) and 54–60 (HIGHAKS). Positions 80 and 229 each coordinate L-glutamine. ATP-binding positions include T248 and 283 to 284 (RL). The short motif at 290–294 (ITSKR) is the 'KMSKS' region element.

This sequence belongs to the class-I aminoacyl-tRNA synthetase family. Monomer.

The protein resides in the cytoplasm. The catalysed reaction is tRNA(Gln) + L-glutamine + ATP = L-glutaminyl-tRNA(Gln) + AMP + diphosphate. The polypeptide is Glutamine--tRNA ligase (Ralstonia pickettii (strain 12J)).